An 86-amino-acid chain; its full sequence is Large ribosomal subunit protein bL27 (86 aa).

The protein belongs to the bacterial ribosomal protein bL27 family.

The sequence is that of Large ribosomal subunit protein bL27 from Christiangramia forsetii (strain DSM 17595 / CGMCC 1.15422 / KT0803) (Gramella forsetii).